A 264-amino-acid polypeptide reads, in one-letter code: Hydroxyethylthiazole kinase (264 aa).

Methionine 43 contacts substrate. Residues arginine 119 and threonine 165 each coordinate ATP. Residue glycine 192 participates in substrate binding.

This sequence belongs to the Thz kinase family. The cofactor is Mg(2+).

The catalysed reaction is 5-(2-hydroxyethyl)-4-methylthiazole + ATP = 4-methyl-5-(2-phosphooxyethyl)-thiazole + ADP + H(+). The protein operates within cofactor biosynthesis; thiamine diphosphate biosynthesis; 4-methyl-5-(2-phosphoethyl)-thiazole from 5-(2-hydroxyethyl)-4-methylthiazole: step 1/1. In terms of biological role, catalyzes the phosphorylation of the hydroxyl group of 4-methyl-5-beta-hydroxyethylthiazole (THZ). The protein is Hydroxyethylthiazole kinase of Anoxybacillus flavithermus (strain DSM 21510 / WK1).